We begin with the raw amino-acid sequence, 460 residues long: uncharacterized protein (460 aa).

Residues 6 to 64 (PVKKNSTYNLYITGMGTKGEGIGKINNFTIFVTGAILGEEVEVNIIKVNKNYAVGKLLN) enclose the TRAM domain. Positions 77, 83, 86, and 163 each coordinate [4Fe-4S] cluster. S-adenosyl-L-methionine is bound by residues Q287, Y316, E337, and D385. Catalysis depends on C412, which acts as the Nucleophile.

The protein belongs to the class I-like SAM-binding methyltransferase superfamily. RNA M5U methyltransferase family.

This is an uncharacterized protein from Clostridium tetani (strain Massachusetts / E88).